We begin with the raw amino-acid sequence, 396 residues long: CCA-adding enzyme (396 aa).

The ATP site is built by glycine 32 and arginine 35. CTP-binding residues include glycine 32 and arginine 35. Residues aspartate 45 and aspartate 47 each contribute to the Mg(2+) site. Arginine 116, aspartate 159, arginine 162, arginine 165, and arginine 168 together coordinate ATP. Arginine 116, aspartate 159, arginine 162, arginine 165, and arginine 168 together coordinate CTP.

The protein belongs to the tRNA nucleotidyltransferase/poly(A) polymerase family. Bacterial CCA-adding enzyme type 3 subfamily. As to quaternary structure, homodimer. The cofactor is Mg(2+).

The enzyme catalyses a tRNA precursor + 2 CTP + ATP = a tRNA with a 3' CCA end + 3 diphosphate. The catalysed reaction is a tRNA with a 3' CCA end + 2 CTP + ATP = a tRNA with a 3' CCACCA end + 3 diphosphate. In terms of biological role, catalyzes the addition and repair of the essential 3'-terminal CCA sequence in tRNAs without using a nucleic acid template. Adds these three nucleotides in the order of C, C, and A to the tRNA nucleotide-73, using CTP and ATP as substrates and producing inorganic pyrophosphate. tRNA 3'-terminal CCA addition is required both for tRNA processing and repair. Also involved in tRNA surveillance by mediating tandem CCA addition to generate a CCACCA at the 3' terminus of unstable tRNAs. While stable tRNAs receive only 3'-terminal CCA, unstable tRNAs are marked with CCACCA and rapidly degraded. The sequence is that of CCA-adding enzyme from Lactobacillus delbrueckii subsp. bulgaricus (strain ATCC 11842 / DSM 20081 / BCRC 10696 / JCM 1002 / NBRC 13953 / NCIMB 11778 / NCTC 12712 / WDCM 00102 / Lb 14).